Reading from the N-terminus, the 309-residue chain is Protein FdhE homolog (309 aa).

It belongs to the FdhE family.

The protein resides in the cytoplasm. Its function is as follows. Necessary for formate dehydrogenase activity. The protein is Protein FdhE homolog of Yersinia pestis bv. Antiqua (strain Antiqua).